We begin with the raw amino-acid sequence, 354 residues long: Uroporphyrinogen decarboxylase (354 aa).

Residues 27 to 31, Asp77, Tyr154, Ser209, and His327 contribute to the substrate site; that span reads RQAGR.

This sequence belongs to the uroporphyrinogen decarboxylase family. Homodimer.

It is found in the cytoplasm. The enzyme catalyses uroporphyrinogen III + 4 H(+) = coproporphyrinogen III + 4 CO2. It functions in the pathway porphyrin-containing compound metabolism; protoporphyrin-IX biosynthesis; coproporphyrinogen-III from 5-aminolevulinate: step 4/4. In terms of biological role, catalyzes the decarboxylation of four acetate groups of uroporphyrinogen-III to yield coproporphyrinogen-III. In Pseudomonas savastanoi pv. phaseolicola (strain 1448A / Race 6) (Pseudomonas syringae pv. phaseolicola (strain 1448A / Race 6)), this protein is Uroporphyrinogen decarboxylase.